Reading from the N-terminus, the 316-residue chain is Putative mannose-6-phosphate isomerase YvyI (316 aa).

His-98, Glu-116, and His-173 together coordinate Zn(2+). The active site involves Arg-193.

This sequence belongs to the mannose-6-phosphate isomerase type 1 family. Zn(2+) serves as cofactor.

The enzyme catalyses D-mannose 6-phosphate = D-fructose 6-phosphate. This chain is Putative mannose-6-phosphate isomerase YvyI (yvyI), found in Bacillus subtilis (strain 168).